The following is a 205-amino-acid chain: Thymidylate kinase (205 aa).

11 to 18 (GLDKSGKT) provides a ligand contact to ATP.

It belongs to the thymidylate kinase family. As to quaternary structure, homodimer; the dimer arrangement is orthogonal and not antiparallel as in human enzyme.

It catalyses the reaction dTMP + ATP = dTDP + ADP. It functions in the pathway pyrimidine metabolism; dTTP biosynthesis. Its function is as follows. Poxvirus TMP kinase is able to phosphorylate dTMP, dUMP and also dGMP from any purine and pyrimidine nucleoside triphosphate. The large substrate specificity is explained by the presence of a canal connecting the edge of the dimer interface to the TMP base binding pocket, canal not found in the human homolog. In Homo sapiens (Human), this protein is Thymidylate kinase (OPG178).